A 588-amino-acid polypeptide reads, in one-letter code: Protein decapentaplegic (588 aa).

A signal peptide spans 1–23 (MRAWLLLLAVLATFQTIVRVAST). The propeptide occupies 24–456 (EDISQRFIAA…DGRHKARSIR (433 aa)). Positions 74-169 (FSEPASFSDS…STESHQSSSI (96 aa)) are disordered. The span at 96-119 (SKSDANRQFNEVHKPRTDQLENSK) shows a compositional bias: basic and acidic residues. A glycan (N-linked (GlcNAc...) asparagine) is linked at N120. Residues 140–153 (RSHHKKSHHHRSHQ) are compositionally biased toward basic residues. A compositionally biased stretch (low complexity) spans 156-169 (QASASTESHQSSSI). N342 and N377 each carry an N-linked (GlcNAc...) asparagine glycan. The interval 454-484 (SIRDVSGGEGGGKGGRNKRQPRRPTRRKNHD) is disordered. Over residues 468-481 (GRNKRQPRRPTRRK) the composition is skewed to basic residues. 3 disulfide bridges follow: C487–C553, C516–C585, and C520–C587. N-linked (GlcNAc...) asparagine glycosylation occurs at N529.

It belongs to the TGF-beta family. In terms of assembly, heterodimers of scw/dpp are the active subunit, dpp/dpp homodimers elicit a basal response and scw/scw homodimers alone are ineffective in specifying a dorsal pattern. Component of a complex composed of dpp, sog and tsg. Interacts with nord and gbb; the interaction interferes with dpp secretion. Expressed in the dorsal region of the embryo, and becomes enriched in a dorsal midline stripe just prior to gastrulation. Expressed in midgut mesoderm and in two overlapping regions of the embryonic large intestine. Expressed in a long-range concentration gradient in the wing imaginal disk.

The protein localises to the secreted. Its function is as follows. Required during oogenesis for eggshell patterning and dorsal/ventral patterning of the embryo. Acts as a morphogen during embryogenesis to pattern the dorsal/ventral axis, specifying dorsal ectoderm and amnioserosa cell fate within the dorsal half of the embryo; this activity is antagonized by binding to sog and tsg. Induces the formation of visceral mesoderm and the heart in early embryos. Required later in embryogenesis for dorsal closure and patterning of the hindgut. Also functions postembryonically as a long-range morphogen during imaginal disk development; is responsible for the progression of the morphogenetic furrow during eye development. Patterns the wing imaginal disk along its anterior/posterior axis and has a role in positioning pro-veins. Also required to subdivide the wing disk along the proximal/distal axis into body wall (notum) and wing. Ensures the correct architecture of wing epithelial cells. Has multiple roles in the developing tracheal system, controlling directed tracheal cell migration during embryogenesis and later specifying the fate of fusion cells in the tracheal branches. Required for viability of larvae. Essential for the maintenance and division of germline stem cells in the ovary. Signals via the type I receptor tkv, the type II receptor punt, and in some tissues via the type I receptor sax, in a signaling cascade that leads to activation and repression of target genes. This is Protein decapentaplegic (dpp) from Drosophila melanogaster (Fruit fly).